The following is an 825-amino-acid chain: PR domain zinc finger protein 1 (825 aa).

The SET domain maps to 84 to 201 (PRNLLFKYAT…ANQELLVWYC (118 aa)). The span at 324–361 (ITRSPIPSSTTPSPSARSSPDQSLKSSSPHSSPGNTVS) shows a compositional bias: low complexity. Residues 324–369 (ITRSPIPSSTTPSPSARSSPDQSLKSSSPHSSPGNTVSPVGPGSQE) are disordered. Positions 527–574 (HVVQPKATSAAMAAPSSDEAMNLIKNKRNMTGYKTLPYPLKKQNGKIK) are interaction with PIAS1. C2H2-type zinc fingers lie at residues 575–597 (YECN…LRVH), 603–625 (FKCQ…YLVH), 631–653 (HECQ…LRLH), and 659–681 (YQCK…KRLH). A Glycyl lysine isopeptide (Lys-Gly) (interchain with G-Cter in SUMO1); alternate cross-link involves residue K816. Residue K816 forms a Glycyl lysine isopeptide (Lys-Gly) (interchain with G-Cter in SUMO2); alternate linkage.

It belongs to the class V-like SAM-binding methyltransferase superfamily. In terms of assembly, interacts with PRMT5. Interacts with FBXO10. Interacts with FBXO11. Interacts with multiple nuclear sumoylation E3 ligases, including CBX4, PIAS1, PIAS2, PIAS3, PIAS4, PML and RNF4, but not RANBP2. Interacts with LDB1, SMARCD3 and SMARCC1. Interacts with EEIG1; following TNFSF11/RANKL stimulation in bone marrow-derived macrophages, the interaction promotes the binding of PRDM1/BLIMP1 to the gene promoter of IRF8. Sumoylation at Lys-816 by PIAS1 augments transcriptional repressor activity, and is critical for plasma cell differentiation. Can be sumoylated with SUMO1 and SUMO2 by PML. Degradation of the wild-type protein mostly depends upon sumoylation, rather than ubiquitination. Desumoylated by SENP1 and SENP6. In terms of processing, ubiquitinated by the SCF(FBXO11) complex, leading to its degradation by the proteasome.

It localises to the nucleus. Its subcellular location is the cytoplasm. Transcription factor that mediates a transcriptional program in various innate and adaptive immune tissue-resident lymphocyte T cell types such as tissue-resident memory T (Trm), natural killer (trNK) and natural killer T (NKT) cells and negatively regulates gene expression of proteins that promote the egress of tissue-resident T-cell populations from non-lymphoid organs. Plays a role in the development, retention and long-term establishment of adaptive and innate tissue-resident lymphocyte T cell types in non-lymphoid organs, such as the skin and gut, but also in other nonbarrier tissues like liver and kidney, and therefore may provide immediate immunological protection against reactivating infections or viral reinfection. Binds specifically to the PRDI element in the promoter of the beta-interferon gene. Drives the maturation of B-lymphocytes into Ig secreting cells. Associates with the transcriptional repressor ZNF683 to chromatin at gene promoter regions. Binds to the promoter and acts as a transcriptional repressor of IRF8, thereby promotes transcription of osteoclast differentiation factors such as NFATC1 and EEIG1. The protein is PR domain zinc finger protein 1 (PRDM1) of Homo sapiens (Human).